A 231-amino-acid chain; its full sequence is Aquaporin Z (231 aa).

Helical transmembrane passes span 9-29 (LLGTFVLVFGGCGSVVFAAAF) and 34-54 (IGFVGVSLAFGLTVLTMIYAV). The NPA 1 motif lies at 63–65 (NPA). The next 3 membrane-spanning stretches (helical) occupy residues 82-102 (IPYIISQVIGGILAAAVLYVI), 133-153 (SAIVAEIVLTAIFLIVIIGAT), and 160-180 (GFAPLAIGLALVLINLISIPI). An NPA 2 motif is present at residues 186-188 (NPA). The chain crosses the membrane as a helical span at residues 202-222 (LEQLWFFWVMPIIGGIVGGGI).

It belongs to the MIP/aquaporin (TC 1.A.8) family. Homotetramer.

The protein resides in the cell inner membrane. It catalyses the reaction H2O(in) = H2O(out). Channel that permits osmotically driven movement of water in both directions. It is involved in the osmoregulation and in the maintenance of cell turgor during volume expansion in rapidly growing cells. It mediates rapid entry or exit of water in response to abrupt changes in osmolarity. In Photorhabdus laumondii subsp. laumondii (strain DSM 15139 / CIP 105565 / TT01) (Photorhabdus luminescens subsp. laumondii), this protein is Aquaporin Z.